The primary structure comprises 270 residues: Tetraspanin-17 (270 aa).

At M1–Y19 the chain is on the cytoplasmic side. The helical transmembrane segment at F20–L40 threads the bilayer. Topologically, residues W41–P63 are extracellular. A glycan (N-linked (GlcNAc...) asparagine) is linked at N51. The chain crosses the membrane as a helical span at residues V64–G84. The Cytoplasmic portion of the chain corresponds to A85 to K94. The chain crosses the membrane as a helical span at residues F95–F115. The Extracellular segment spans residues V116–N234. 4 disulfide bridges follow: C155/C223, C156/C188, C172/C182, and C189/C202. N-linked (GlcNAc...) asparagine glycosylation occurs at N171. A helical membrane pass occupies residues L235–L255. Residues A256–W270 are Cytoplasmic-facing.

It belongs to the tetraspanin (TM4SF) family. Interacts with ADAM10; the interaction influences ADAM10 substrate specificity, endocytosis and turnover.

Its subcellular location is the cell membrane. Its function is as follows. Part of TspanC8 subgroup, composed of 6 members that interact with the transmembrane metalloprotease ADAM10. This interaction is required for ADAM10 exit from the endoplasmic reticulum and for enzymatic maturation and trafficking to the cell surface as well as substrate specificity. Different TspanC8/ADAM10 complexes have distinct substrates. Seems to regulate VE-cadherin expression in endothelial cells probably through interaction with ADAM10, promoting leukocyte transmigration. The sequence is that of Tetraspanin-17 from Homo sapiens (Human).